A 316-amino-acid polypeptide reads, in one-letter code: Neuroguidin (316 aa).

2 disordered regions span residues Ser143–Tyr172 and Ser280–His316. Acidic residues predominate over residues Ala145–Ala157. Residues Lys297–His316 show a composition bias toward basic residues.

This sequence belongs to the SAS10 family. Part of the small subunit (SSU) processome, composed of more than 70 proteins and the RNA chaperone small nucleolar RNA (snoRNA) U3.

The protein resides in the nucleus. It is found in the nucleolus. The protein localises to the chromosome. Its subcellular location is the centromere. It localises to the cytoplasm. The protein resides in the cell projection. It is found in the axon. The protein localises to the dendrite. Its subcellular location is the filopodium. Its function is as follows. Part of the small subunit (SSU) processome, first precursor of the small eukaryotic ribosomal subunit. During the assembly of the SSU processome in the nucleolus, many ribosome biogenesis factors, an RNA chaperone and ribosomal proteins associate with the nascent pre-rRNA and work in concert to generate RNA folding, modifications, rearrangements and cleavage as well as targeted degradation of pre-ribosomal RNA by the RNA exosome. Its dissociation from the complex determines the transition from state pre-A1 to state pre-A1*. May inhibit mRNA translation. This Xenopus tropicalis (Western clawed frog) protein is Neuroguidin (ngdn).